We begin with the raw amino-acid sequence, 216 residues long: Urease operon 23 kDa accessory protein (216 aa).

In terms of biological role, involved in the expression of hydrogenase activity. May be a regulatory gene affecting the expression of the hydrogenase operon or could be involved in the process of nickel incorporation into the hydrogenase apoenzyme. The polypeptide is Urease operon 23 kDa accessory protein (Rhizobium meliloti (strain 1021) (Ensifer meliloti)).